A 352-amino-acid chain; its full sequence is Uroporphyrinogen decarboxylase (352 aa).

Residues 27 to 31 (RQAGR), Asp77, Tyr154, Thr209, and His325 each bind substrate.

This sequence belongs to the uroporphyrinogen decarboxylase family. As to quaternary structure, homodimer.

It is found in the cytoplasm. The enzyme catalyses uroporphyrinogen III + 4 H(+) = coproporphyrinogen III + 4 CO2. It functions in the pathway porphyrin-containing compound metabolism; protoporphyrin-IX biosynthesis; coproporphyrinogen-III from 5-aminolevulinate: step 4/4. In terms of biological role, catalyzes the decarboxylation of four acetate groups of uroporphyrinogen-III to yield coproporphyrinogen-III. In Legionella pneumophila (strain Lens), this protein is Uroporphyrinogen decarboxylase.